A 176-amino-acid chain; its full sequence is Neuropeptide-like protein 1 (176 aa).

An N-terminal signal peptide occupies residues 1-19; the sequence is MKATFVLACLLVIAAVSHA. The segment at 59-79 is disordered; it reads GKRSAEQNEQANKEDKATSDK. Residues 61 to 79 are compositionally biased toward basic and acidic residues; that stretch reads RSAEQNEQANKEDKATSDK.

Its function is as follows. In AWC olfactory sensory neurons, required for the detection of preferred food sources. This Caenorhabditis elegans protein is Neuropeptide-like protein 1 (nlp-1).